The chain runs to 426 residues: Glutamate-1-semialdehyde 2,1-aminomutase (426 aa).

Position 265 is an N6-(pyridoxal phosphate)lysine (K265).

It belongs to the class-III pyridoxal-phosphate-dependent aminotransferase family. HemL subfamily. As to quaternary structure, homodimer. It depends on pyridoxal 5'-phosphate as a cofactor.

It is found in the cytoplasm. The enzyme catalyses (S)-4-amino-5-oxopentanoate = 5-aminolevulinate. It participates in porphyrin-containing compound metabolism; protoporphyrin-IX biosynthesis; 5-aminolevulinate from L-glutamyl-tRNA(Glu): step 2/2. This is Glutamate-1-semialdehyde 2,1-aminomutase from Pectobacterium atrosepticum (strain SCRI 1043 / ATCC BAA-672) (Erwinia carotovora subsp. atroseptica).